A 401-amino-acid chain; its full sequence is Probable thioesterase FGSG_00047 (401 aa).

A disordered region spans residues 379-401; sequence AREMDQRKRQKDFTHTTIHDKNS.

This sequence belongs to the AMT4 thioesterase family.

The protein operates within mycotoxin biosynthesis. Its function is as follows. Probable thioesterase; part of the gene cluster that mediates the biosynthesis of gramillins A and B, bicyclic lipopeptides that induce cell death in maize leaves but not in wheat leaves. The nonribosomal peptide synthetase GRA1 incorporates respectively a glutamic adic (Glu), a leucine (Leu), a serine (Ser), a hydroxyglutamine (HOGln), a 2-amino decanoic acid, and 2 cysteins (CysB and CysA). The biosynthesis of 2-amino decanoic acid incorporated in gramillins could be initiated by a fatty acid synthase composed of the alpha and beta subunits FGSG_00036 and FGSG_11656. The cytochrome P450 monooxygenase FGSG_15680 could hydroxylate the fatty acid chain. Subsequent oxidation to the ketone by the oxidoreductase FGSG_00048 and transamination by aminotransferase FGSG_00049 could form 2-amino-decanoic acid. On the other hand, FGSG_15680 could also be responsible for the HO-modified glutamine at the gamma-position. Whether hydroxylation occurs on the fully assembled product or on the Gln residue prior to assembly into the gramillins requires further proof. The thioredoxin FGSG_00043 could also be required for the disulfide-bond formation between CysA and CysB. The specific involvement of the remaining proteins from the cluster is more difficult to discern, but could have broader regulatory (FGSG_00040 and FGSG_11657) or enzymatic functions (FGSG_00044 and FGSG_00045). The final C-domain of GRA1 does not possess the expected sequence of a termination CT domain, often implicated in macrocyclization and release of a cyclopeptidein fungal NRPs; and the thioesterase FGSG_00047 may act in concert with the terminal C-domain of GRA1 to catalyze the formation of the macrocyclic anhydride and release of the products. The protein is Probable thioesterase FGSG_00047 of Gibberella zeae (strain ATCC MYA-4620 / CBS 123657 / FGSC 9075 / NRRL 31084 / PH-1) (Wheat head blight fungus).